The primary structure comprises 201 residues: Adenylyl-sulfate kinase (201 aa).

Position 35-42 (35-42 (GLSGSGKS)) interacts with ATP. Ser109 (phosphoserine intermediate) is an active-site residue.

It belongs to the APS kinase family.

It carries out the reaction adenosine 5'-phosphosulfate + ATP = 3'-phosphoadenylyl sulfate + ADP + H(+). It functions in the pathway sulfur metabolism; hydrogen sulfide biosynthesis; sulfite from sulfate: step 2/3. Its function is as follows. Catalyzes the synthesis of activated sulfate. In Salmonella paratyphi C (strain RKS4594), this protein is Adenylyl-sulfate kinase.